The chain runs to 259 residues: uncharacterized protein (259 aa).

The signal sequence occupies residues 1–28; sequence MNIKRRLKYLTSCLLVSAFFWINSSAWA. Helical transmembrane passes span 32 to 52 and 191 to 211; these read EIPP…IYVA and WGFL…GIFT.

Its subcellular location is the cell membrane. This is an uncharacterized protein from Coxiella burnetii (strain RSA 493 / Nine Mile phase I).